The following is a 164-amino-acid chain: Phosphopantetheine adenylyltransferase (164 aa).

Belongs to the eukaryotic CoaD family.

It is found in the cytoplasm. The catalysed reaction is (R)-4'-phosphopantetheine + ATP + H(+) = 3'-dephospho-CoA + diphosphate. It participates in cofactor biosynthesis; coenzyme A biosynthesis. In terms of biological role, reversibly transfers an adenylyl group from ATP to 4'-phosphopantetheine, yielding dephospho-CoA (dPCoA) and pyrophosphate. The sequence is that of Phosphopantetheine adenylyltransferase from Methanothermobacter thermautotrophicus (strain ATCC 29096 / DSM 1053 / JCM 10044 / NBRC 100330 / Delta H) (Methanobacterium thermoautotrophicum).